The following is a 316-amino-acid chain: Myb-related protein 306 (316 aa).

HTH myb-type domains lie at 9–65 (KIGV…RPGI) and 66–116 (KRGD…KKKL). DNA-binding regions (H-T-H motif) lie at residues 37 to 61 (WRAI…TNYL) and 89 to 112 (WAAI…NTHL). Disordered regions lie at residues 119 to 144 (LQSP…SKGQ), 168 to 193 (KTSS…QAST), and 209 to 230 (KKSP…TTTS). Over residues 135 to 144 (DSDKSVSKGQ) the composition is skewed to basic and acidic residues. Residues 181–193 (VQTTQPRPFQAST) are compositionally biased toward polar residues. Low complexity predominate over residues 216 to 230 (SSTSQAGSSESTTTS).

As to expression, expressed in flowers, leaves and weakly in seed pods.

It localises to the nucleus. Functionally, transcription factor. This chain is Myb-related protein 306, found in Antirrhinum majus (Garden snapdragon).